The following is a 468-amino-acid chain: Lipase 1 (468 aa).

Positions 1-16 are cleaved as a signal peptide; the sequence is MRGIAVFLAFISLIFA. A glycan (N-linked (GlcNAc...) asparagine) is linked at Asn79. Residues Cys112 and Cys285 are joined by a disulfide bond. The active-site Charge relay system is Ser196. Asn231 and Asn319 each carry an N-linked (GlcNAc...) asparagine glycan. Catalysis depends on charge relay system residues Asp348 and His381. Residues Cys364 and Cys409 are joined by a disulfide bond. Asn417, Asn422, and Asn451 each carry an N-linked (GlcNAc...) asparagine glycan.

Belongs to the AB hydrolase superfamily. Lipase family. Class Lip subfamily.

The protein resides in the secreted. It catalyses the reaction a triacylglycerol + H2O = a diacylglycerol + a fatty acid + H(+). Secreted lipase that is able to hydrolyze both the neutral triacylglycerols and the monopalmitate ester Tween 40, allowing the use of hydrolyzed products as carbon sources. Has broad lipolytic activity, which may be important for colonization and subsequent infection, therefore contributing to the persistence and virulence in human tissue. The chain is Lipase 1 from Candida albicans (strain SC5314 / ATCC MYA-2876) (Yeast).